The primary structure comprises 87 residues: Small ribosomal subunit protein bS16 (87 aa).

This sequence belongs to the bacterial ribosomal protein bS16 family.

In Ehrlichia ruminantium (strain Gardel), this protein is Small ribosomal subunit protein bS16.